The following is a 147-amino-acid chain: Large ribosomal subunit protein uL13 (147 aa).

The protein belongs to the universal ribosomal protein uL13 family. In terms of assembly, part of the 50S ribosomal subunit.

This protein is one of the early assembly proteins of the 50S ribosomal subunit, although it is not seen to bind rRNA by itself. It is important during the early stages of 50S assembly. The protein is Large ribosomal subunit protein uL13 of Nocardioides sp. (strain ATCC BAA-499 / JS614).